The following is a 280-amino-acid chain: Nitrogenase iron-iron protein alpha chain (280 aa).

The [8Fe-7S] cluster site is built by cysteine 5, cysteine 31, and cysteine 94. Cysteine 213 is a [8Fe-9S-C-homocitryl] cluster binding site.

This sequence belongs to the NifD/NifK/NifE/NifN family. As to quaternary structure, hexamer of two alpha, two beta, and two delta chains. The cofactor is [8Fe-7S] cluster. [8Fe-9S-C-homocitryl] cluster is required as a cofactor.

It carries out the reaction N2 + 8 reduced [2Fe-2S]-[ferredoxin] + 16 ATP + 16 H2O = H2 + 8 oxidized [2Fe-2S]-[ferredoxin] + 2 NH4(+) + 16 ADP + 16 phosphate + 6 H(+). Its function is as follows. This iron-iron protein is part of the nitrogenase complex that catalyzes the key enzymatic reactions in nitrogen fixation. Other nitrogenase complexes utilize a molybdenum-iron protein or a vanadium-iron protein. This chain is Nitrogenase iron-iron protein alpha chain (anfD), found in Heliomicrobium gestii (Heliobacterium gestii).